The primary structure comprises 1678 residues: Nuclear pore complex protein Nup98-Nup96 (1678 aa).

A compositionally biased stretch (low complexity) spans 1–11 (MFGQNKSFGSS). 5 disordered regions span residues 1–41 (MFGQ…QPAN), 68–100 (SSIF…FGST), 301–366 (TTGS…GAPA), 441–473 (FGNT…TQAT), and 603–631 (SKEA…RSVH). Over residues 12–22 (SFGGGSSGSGL) the composition is skewed to gly residues. Composition is skewed to low complexity over residues 23–38 (FGQN…LFGQ) and 73–83 (SPQQPQNNQSS). Residues 306-329 (LFGNQQPQTNTGGSLFGNTQNQNQ) are compositionally biased toward polar residues. The segment covering 345–366 (FGQAQQQPQQQSSGFSFGGAPA) has biased composition (low complexity). Polar residues-rich tracts occupy residues 456–473 (SQPQ…TQAT) and 615–628 (RNST…LTNR). The region spanning 777–919 (KPDYFSLPTI…GSWVFRVDHF (143 aa)) is the Peptidase S59 domain. S920 functions as the Nucleophile in the catalytic mechanism.

It belongs to the nucleoporin GLFG family. Part of the NPC. Post-translationally, the Nup98 and Nup96 chains are autoproteolytically processed from a single precursor protein.

It is found in the cytoplasmic granule. The protein resides in the nucleus membrane. It localises to the nucleus. The protein localises to the nuclear pore complex. Its subcellular location is the nucleus envelope. It is found in the chromosome. Functionally, nup98 and Nup96 play a role in the bidirectional transport across the nucleoporin complex (NPC). Required for the nuclear import of hcp-4 during mitotic prophase, this step is essential for centrosome assembly and resolution. Regulates nucleoporin npp-5 localization to the nuclear membrane during interphase and to kinetochores during metaphase. Has a role in P granule integrity; may promote the 'liquid phase' of P granules by increasing the number of interacting RNA-protein complexes. Binds nos-2 mRNA, probably indirectly, and promotes its accumulation in P granules. The polypeptide is Nuclear pore complex protein Nup98-Nup96 (Caenorhabditis elegans).